Here is a 546-residue protein sequence, read N- to C-terminus: Calcitonin receptor-like protein 1 (546 aa).

Topologically, residues 1 to 171 (MADATSPFNV…EVARNARKLE (171 aa)) are cytoplasmic. Residues 172 to 192 (FVGLGLSLVSLILAISIFSYF) form a helical membrane-spanning segment. The Extracellular portion of the chain corresponds to 193–205 (RRLRVFRNLLHLH). A helical transmembrane segment spans residues 206-226 (LMIAMLMVVILRLVLYIDLIF). At 227-251 (TGENGPHTNSAEGKTINTMPIVCEG) the chain is on the cytoplasmic side. A helical transmembrane segment spans residues 252-272 (MFFFLEYFKTVTFCWMFLEGI). At 273–292 (YLNNQIVFGFFNSEPKLLPY) the chain is on the extracellular side. A helical membrane pass occupies residues 293–313 (FIAGYGIPLVHTMLWLLVVLI). At 314–333 (KKDFKVERCLGSYYLEPEFW) the chain is on the cytoplasmic side. Residues 334 to 354 (ILDGPRMAELVINLFFICNVI) form a helical membrane-spanning segment. The Extracellular segment spans residues 355 to 377 (RVLYSKVRESNNTSEAGLKKSVK). N-linked (GlcNAc...) asparagine glycans are attached at residues Asn365 and Asn366. A helical membrane pass occupies residues 378 to 398 (AAMMLLPLLGVPNIMQTIPFA). The Cytoplasmic segment spans residues 399–403 (PTRDN). The helical transmembrane segment at 404 to 424 (IMVFAVWTYTASFTYMYQGLM) threads the bilayer. At 425 to 546 (VASIYCFTNK…EGSNRSTKSP (122 aa)) the chain is on the extracellular side. N-linked (GlcNAc...) asparagine glycosylation is found at Asn472 and Asn476. The segment at 472–546 (NGTANASAPQ…EGSNRSTKSP (75 aa)) is disordered. Polar residues predominate over residues 473–485 (GTANASAPQTNNA). Basic and acidic residues predominate over residues 500–520 (KGSDDSTTKLMKDAVMEEEKN). Asn540 carries N-linked (GlcNAc...) asparagine glycosylation.

Belongs to the G-protein coupled receptor 2 family. In terms of tissue distribution, expression was observed in the mechanosensory neuron pairs PLM, ALM, FLP, OLQD, and OLQV, the chemosensory neurons PHA, PHB, RMEV, the ring motor neurons RMED, and the pharyngeal interneuron pair I1. Expression in sensory neurons PHA, PQR and URY are responsible for mate searching behavior. Expressed in AIY, RIM, RIA, and other neurons.

It localises to the cell membrane. In terms of biological role, G-protein coupled receptor for PDF neuropeptides. Plays a role in responses to environmental signals, including chemicals and touch, and in modulating locomotory behaviors. Capable of transducing signals via an adenylate cyclase acy-1 cAMP-dependent pathway. Required to regulate the sex-specific expression of TGFbeta-like daf-7 in the ASJ chemosensory neurons, perhaps acting via acy-1. Involved in modulating mate searching behavior independent of nutritional status. In the presence of food, plays a role in initiating and extending exploratory roaming behavior, perhaps acting in AIY, RIM, RIA, and other neurons, in opposition to 5-hydroxytryptamine (serotonin) signaling. Involved in mediating arousal from the sleep-like state called lethargus, which occurs during molting between larval and adult stages, in part by regulating touch sensitivity. May play a role in circadian rhythms of locomotor activity. G-protein coupled receptor which is activated by neuropeptides PDF-1 and PDF-2. Probably acts through the G-alpha(s) type of G proteins to elevate cAMP levels. Functionally, G-protein coupled receptor which is activated by neuropeptides PDF-1 and PDF-2; however, activation is lower compared to isoforms a and b. Probably inhibits cAMP levels through the G-alpha(i/o) type of G proteins. This chain is Calcitonin receptor-like protein 1 (pdfr-1), found in Caenorhabditis elegans.